Consider the following 1226-residue polypeptide: E3 ubiquitin-protein ligase mind-bomb (1226 aa).

The span at 1 to 12 (MSCAATLSSAKD) shows a compositional bias: polar residues. 2 disordered regions span residues 1-42 (MSCA…NTNT) and 66-87 (GGGG…AGGV). Gly residues predominate over residues 19–30 (SGGGGGGGGGGA). Low complexity-rich tracts occupy residues 31-42 (PTNSNTNTNTNT) and 73-86 (GGTT…AAGG). The MIB/HERC2 1 domain maps to 100 to 168 (VRRFSMEGVG…AYDLRILDSA (69 aa)). The ZZ-type zinc-finger motif lies at 174 to 226 (HEGTMCDTCRQQPIFGIRWKCAECINYDLCSICYHGDKHHLRHRFYRITTPGG). Residues cysteine 179, cysteine 182, cysteine 194, cysteine 197, cysteine 203, cysteine 206, histidine 212, and histidine 216 each contribute to the Zn(2+) site. Residues 237 to 315 (SKKVLARGIF…MADLKVVNDA (79 aa)) enclose the MIB/HERC2 2 domain. ANK repeat units lie at residues 567–596 (AGHT…DVEI), 600–629 (DGDR…DLNA), 633–662 (RRQT…HPSL), 666–695 (EGDT…DITL), 699–731 (NGFN…IVEE), 735–765 (DGYT…NMDR), 769–798 (NLQT…DLNI), and 802–833 (DGDT…KLLM). A disordered region spans residues 890–919 (TDDSELPGNVAGTSSSARARAASGSLNQSS). Low complexity predominate over residues 900–914 (AGTSSSARARAASGS). RING-type zinc fingers lie at residues 970–1005 (CLVC…LICR) and 1017–1052 (CLVC…VLCR). Residues 1159 to 1181 (VNNFQMDDVQKLKQQLQDIKEQT) are a coiled coil. The RING-type 3 zinc finger occupies 1183-1216 (CPVCFDRIKNMVFLCGHGTCQMCGDQIEGCPICR).

Interacts with intracellular domain of Dl and Ser. As to expression, ubiquitous in the wing imaginal disk (at protein level).

Its subcellular location is the cytoplasm. The protein resides in the cell cortex. The catalysed reaction is S-ubiquitinyl-[E2 ubiquitin-conjugating enzyme]-L-cysteine + [acceptor protein]-L-lysine = [E2 ubiquitin-conjugating enzyme]-L-cysteine + N(6)-ubiquitinyl-[acceptor protein]-L-lysine.. The protein operates within protein modification; protein ubiquitination. Functionally, E3 ubiquitin-protein ligase that mediates ubiquitination of Delta (Dl) and Serrate (Ser) receptors, which act as ligands of Notch proteins. Positively regulates the Notch signaling by ubiquitinating the intracellular domain of Dl and Ser, leading to endocytosis of Dl and Ser receptors. Regulates a subset of Notch signaling events, including wing margin specification, leg segmentation and vein determination, that are distinct from those events requiring neuralize (neur) activity. Also modulates lateral inhibition, a neur- and Dl-dependent signaling event, suggesting a distinct but partially complementary function with neur. In Drosophila melanogaster (Fruit fly), this protein is E3 ubiquitin-protein ligase mind-bomb (mib1).